A 620-amino-acid polypeptide reads, in one-letter code: Glutathione-regulated potassium-efflux system protein KefC (620 aa).

12 helical membrane passes run 4 to 24 (HTLIQALIYLGSAALIVPVAV), 26 to 46 (LGLGSVLGYLIAGGLIGPWGL), 54 to 74 (AILHFAEIGVVLMLFVIGLEL), 86 to 106 (VFGGGALQMGACGLLLGGFCV), 114 to 134 (VALLIGLTLALSSTAIAMQAM), 149 to 169 (FAVLLFQDIAAIPLVAMIPLL), 178 to 198 (ASAFFLSALKVVGALALVVLL), 218 to 238 (VFSAVALFLVFGFGLLLEEAG), 271 to 291 (LLLGLFFIGVGMSIDFGTLVA), 296 to 316 (VLTLLFGFLIIKTVTLWLVAK), 326 to 346 (RWFAVLLGQGSEFAFVIFGAA), and 359 to 379 (ALTLAVALSMAATPLLLVLLT). The 120-residue stretch at 399-518 (QPRVIIAGFG…AGVAQPERET (120 aa)) folds into the RCK N-terminal domain. Residues 596–620 (HGWQGTREGKHTGNDADEPEVKPQP) form a disordered region.

This sequence belongs to the monovalent cation:proton antiporter 2 (CPA2) transporter (TC 2.A.37) family. KefC subfamily. As to quaternary structure, homodimer. Interacts with the regulatory subunit KefF.

The protein localises to the cell inner membrane. In terms of biological role, pore-forming subunit of a potassium efflux system that confers protection against electrophiles. Catalyzes K(+)/H(+) antiport. This chain is Glutathione-regulated potassium-efflux system protein KefC, found in Cronobacter sakazakii (strain ATCC BAA-894) (Enterobacter sakazakii).